The chain runs to 256 residues: Small ribosomal subunit protein eS1 (256 aa).

Position 2 is an N-acetylalanine; partial (Ala2).

The protein belongs to the eukaryotic ribosomal protein eS1 family. Component of the small ribosomal subunit. Mature ribosomes consist of a small (40S) and a large (60S) subunit. The 40S subunit contains about 33 different proteins and 1 molecule of RNA (18S). The 60S subunit contains about 49 different proteins and 3 molecules of RNA (25S, 5.8S and 5S).

The protein localises to the cytoplasm. This is Small ribosomal subunit protein eS1 from Candida albicans (strain SC5314 / ATCC MYA-2876) (Yeast).